We begin with the raw amino-acid sequence, 3357 residues long: Versican core protein (3357 aa).

Positions 1-23 (MLINMKGILWMCSTLLLTHALHQ) are cleaved as a signal peptide. Positions 24-146 (AKMETSPPVK…EDTQDTMSLA (123 aa)) constitute an Ig-like V-type domain. Intrachain disulfides connect Cys44–Cys130, Cys172–Cys243, Cys196–Cys217, Cys270–Cys333, and Cys294–Cys315. A glycan (N-linked (GlcNAc...) asparagine) is linked at Asn57. Link domains follow at residues 150–245 (VVFH…YCYV) and 251–347 (DVFH…YCFK). Asn330, Asn351, and Asn441 each carry an N-linked (GlcNAc...) asparagine glycan. Residues 348–1308 (PKQNISEATT…IIEVRENKTG (961 aa)) are GAG-alpha (glucosaminoglycan attachment domain). A compositionally biased stretch (basic and acidic residues) spans 625 to 634 (EPKTNGKVTE). Residues 625–646 (EPKTNGKVTEDEFGQSQPTTTF) form a disordered region. A glycan (O-linked (Xyl...) (chondroitin sulfate) serine) is linked at Ser660. Disordered stretches follow at residues 801 to 863 (WPGD…KPLE) and 881 to 908 (TSTS…TTST). The N-linked (GlcNAc...) asparagine glycan is linked to Asn807. Residues Asn914 and Asn951 are each glycosylated (N-linked (GlcNAc...) asparagine). Disordered regions lie at residues 1010–1088 (SPGA…YPPG) and 1252–1288 (DHMT…PAAG). Composition is skewed to polar residues over residues 1017–1042 (TGVS…SSTA) and 1275–1286 (SKTQELSTSTPA). N-linked (GlcNAc...) asparagine glycosylation is found at Asn1305 and Asn1371. A GAG-beta region spans residues 1309 to 3051 (RLSDMIVSGH…VEGTAVYLPG (1743 aa)). A compositionally biased stretch (basic and acidic residues) spans 1396 to 1406 (DPEAAEARRGQ). Disordered regions lie at residues 1396-1421 (DPEA…DSSA) and 1458-1524 (TYPE…AIEQ). Composition is skewed to polar residues over residues 1411–1421 (APSQNFPDSSA) and 1487–1498 (WSESITESSPNL). Residues Ser1517 and Ser1599 are each glycosylated (O-linked (Xyl...) (chondroitin sulfate) serine). Residues 1664 to 1705 (LPSPDARPTTVWNSNSTSEWVSDKSFEGRKKKENEDEEGAVN) form a disordered region. The segment covering 1673–1683 (TVWNSNSTSEW) has biased composition (polar residues). The N-linked (GlcNAc...) asparagine glycan is linked to Asn1678. Basic and acidic residues predominate over residues 1684-1697 (VSDKSFEGRKKKEN). 2 O-linked (Xyl...) (chondroitin sulfate) serine glycosylation sites follow: Ser1907 and Ser1931. Residues 1926-1965 (VGMGGSDDERVRDTQTSSSIPTTSDNIYPVPDSKGPDSTV) form a disordered region. Over residues 1939–1951 (TQTSSSIPTTSDN) the composition is skewed to polar residues. N-linked (GlcNAc...) asparagine glycosylation is present at Asn2053. O-linked (Xyl...) (chondroitin sulfate) serine glycans are attached at residues Ser2219 and Ser2226. The N-linked (GlcNAc...) asparagine glycan is linked to Asn2243. Residues 2308 to 2322 (TLSHTGTEEPTTSTL) are compositionally biased toward polar residues. Disordered regions lie at residues 2308 to 2374 (TLSH…ATSP) and 2475 to 2494 (YPTS…EGIE). Asn2361 carries N-linked (GlcNAc...) asparagine glycosylation. The segment covering 2475–2486 (YPTSTLPSTEPY) has biased composition (low complexity). Residues Ser2585 and Ser2586 each carry the phosphoserine modification. Asn2626 is a glycosylation site (N-linked (GlcNAc...) asparagine). 3 O-linked (Xyl...) (chondroitin sulfate) serine glycosylation sites follow: Ser2696, Ser2697, and Ser2741. The disordered stretch occupies residues 2853–2908 (LGGNVHRTEPPSMSRDPALDVSEDESKHKLLEELETSPTKPETSQDFPNKAKDHIP). The span at 2888–2899 (TSPTKPETSQDF) shows a compositional bias: polar residues. Residue Asn3029 is glycosylated (N-linked (GlcNAc...) asparagine). In terms of domain architecture, EGF-like 1 spans 3051 to 3087 (GPDLCKTNPCLNGGTCYPTETSYVCTCAPGYSGDQCE). Cystine bridges form between Cys3055–Cys3066, Cys3060–Cys3075, Cys3077–Cys3086, Cys3093–Cys3104, Cys3098–Cys3113, Cys3115–Cys3124, Cys3131–Cys3142, Cys3159–Cys3251, Cys3227–Cys3243, Cys3258–Cys3301, and Cys3287–Cys3314. One can recognise an EGF-like 2; calcium-binding domain in the interval 3089–3125 (DFDECHSNPCRNGATCVDGFNTFRCLCLPSYVGALCE). The region spanning 3138-3252 (FQGQCYKYFA…CNYHLTYTCK (115 aa)) is the C-type lectin domain. The region spanning 3256 to 3316 (VACGQPPVVE…WAMPKITCMN (61 aa)) is the Sushi domain. 2 N-linked (GlcNAc...) asparagine glycosylation sites follow: Asn3331 and Asn3341. Residues 3331–3342 (NSSSAKDNSINT) show a composition bias toward polar residues. The segment at 3331–3357 (NSSSAKDNSINTSKHEHRWSRRQETRR) is disordered.

This sequence belongs to the aggrecan/versican proteoglycan family. Interacts with FBLN1. Post-translationally, phosphorylated by FAM20C in the extracellular medium. Proteolytically cleaved by ADAMTS5 and ADAMTS15 in the pericellular matrix surrounding myoblasts, facilitating myoblast contact and fusion which is required for skeletal muscle development and regeneration. Expressed in the retina (at protein level). Isoform V2: Only expressed in brain.

It localises to the secreted. Its subcellular location is the extracellular space. The protein localises to the extracellular matrix. The protein resides in the cell projection. It is found in the cilium. It localises to the photoreceptor outer segment. Its subcellular location is the interphotoreceptor matrix. Functionally, may play a role in intercellular signaling and in connecting cells with the extracellular matrix. May take part in the regulation of cell motility, growth and differentiation. Binds hyaluronic acid. This chain is Versican core protein (Vcan), found in Mus musculus (Mouse).